The chain runs to 555 residues: Polypyrimidine tract-binding protein 1 (555 aa).

Residue M1 is modified to N-acetylmethionine. S16 carries the post-translational modification Phosphoserine. RRM domains are found at residues 58–142 (RVIH…SSPN), 183–259 (LRII…FSKL), and 361–412 (SVLL…SQAQ). A Glycyl lysine isopeptide (Lys-Gly) (interchain with G-Cter in SUMO2) cross-link involves residue K64. Y126 carries the phosphotyrosine modification. At T137 the chain carries Phosphothreonine. Residue S140 is modified to Phosphoserine. A Glycyl lysine isopeptide (Lys-Gly) (interchain with G-Cter in SUMO2) cross-link involves residue K217. Residues 435–457 (HQSVQLPREGQEDQGLTKDYGSS) form a disordered region. Residue S457 is modified to Phosphoserine. The 76-residue stretch at 478-553 (ATLHLSNIPP…HHLRVSFSKS (76 aa)) folds into the RRM 4 domain.

Monomer. Part of a ternary complex containing KHSRP, PTBP1, PTBP2 and HNRPH1. Interacts with SFPQ. Interacts with RAVER1. Interacts with IVNS1ABP (via BACK domain); the interaction is direct. Expressed in myoblast; expression gradually decreases during muscle cell differentiation (at protein level).

It localises to the nucleus. Plays a role in pre-mRNA splicing and in the regulation of alternative splicing events. Activates exon skipping of its own pre-mRNA during muscle cell differentiation. Binds to the polypyrimidine tract of introns. May promote RNA looping when bound to two separate polypyrimidine tracts in the same pre-mRNA. May promote the binding of U2 snRNP to pre-mRNA. Cooperates with RAVER1 to modulate switching between mutually exclusive exons during maturation of the TPM1 pre-mRNA. Represses the splicing of MAPT/Tau exon 10. Binds to polypyrimidine-rich controlling element (PCE) of CFTR and promotes exon skipping of CFTR exon 9, thereby antagonizing TIA1 and its role in exon inclusion of CFTR exon 9. Plays a role in the splicing of pyruvate kinase PKM by binding repressively to a polypyrimidine tract flanking PKM exon 9, inhibiting exon 9 inclusion and resulting in exon 10 inclusion and production of the PKM M2 isoform. The chain is Polypyrimidine tract-binding protein 1 (Ptbp1) from Mus musculus (Mouse).